The primary structure comprises 337 residues: Cytoskeleton protein RodZ (337 aa).

Residues 1–111 (MNTEATHDQN…LGKRRKKRDG (111 aa)) are Cytoplasmic-facing. Residues 19–71 (LRNAREQLGLSQQAVAERLCLKVSTVRDIEEDKAPADLASTFLRGYIRSYARL) enclose the HTH cro/C1-type domain. The H-T-H motif DNA-binding region spans 30–49 (QQAVAERLCLKVSTVRDIEE). The helical; Signal-anchor for type II membrane protein transmembrane segment at 112–132 (WLMTFTWLVLFVVIGLSGAWW) threads the bilayer. Residues 133–337 (WQDHKAQQEE…TLNAEQSPAQ (205 aa)) lie on the Periplasmic side of the membrane. The segment covering 145–167 (TMADQSSAELSSNSEQGQSVPLN) has biased composition (polar residues). The tract at residues 145 to 237 (TMADQSSAEL…ATTTPDGAAP (93 aa)) is disordered. A compositionally biased stretch (low complexity) spans 168–207 (TSTTTDPATTSTPPASVDTTATNTQTPAVTAPAPAVDPQQ). Residues 208–218 (NAVVSPSQANV) show a composition bias toward polar residues. Low complexity predominate over residues 219-237 (DTAATPAPTATTTPDGAAP).

Belongs to the RodZ family.

Its subcellular location is the cell inner membrane. Functionally, cytoskeletal protein that is involved in cell-shape control through regulation of the length of the long axis. This Escherichia coli (strain 55989 / EAEC) protein is Cytoskeleton protein RodZ.